The primary structure comprises 225 residues: MNSIEFPLLDRTTQISVISTTSNDLSNWSRLSSLWPLLYGTSCCFIEFASLIGSRFDFDRYGLVPRSSPRQADLILTAGTVTMKMAPSLVRLYEQMPEPKYVIAMGACTITGGMFSTDSYSTVRGVDKLIPVDVYLPGCPPKPEAVIDAITKLRKKISREIYEDRIRSQPGKRCFTTNHKFNIERTTHTGNYDQELLYQSPSTSKIPPETFFKYKRSVSSNELVN.

The [4Fe-4S] cluster site is built by cysteine 43, cysteine 44, cysteine 108, and cysteine 139.

This sequence belongs to the complex I 20 kDa subunit family. As to quaternary structure, NDH is composed of at least 16 different subunits, 5 of which are encoded in the nucleus. The cofactor is [4Fe-4S] cluster.

The protein resides in the plastid. It is found in the chloroplast thylakoid membrane. It catalyses the reaction a plastoquinone + NADH + (n+1) H(+)(in) = a plastoquinol + NAD(+) + n H(+)(out). It carries out the reaction a plastoquinone + NADPH + (n+1) H(+)(in) = a plastoquinol + NADP(+) + n H(+)(out). Functionally, NDH shuttles electrons from NAD(P)H:plastoquinone, via FMN and iron-sulfur (Fe-S) centers, to quinones in the photosynthetic chain and possibly in a chloroplast respiratory chain. The immediate electron acceptor for the enzyme in this species is believed to be plastoquinone. Couples the redox reaction to proton translocation, and thus conserves the redox energy in a proton gradient. The sequence is that of NAD(P)H-quinone oxidoreductase subunit K, chloroplastic from Manihot esculenta (Cassava).